Reading from the N-terminus, the 542-residue chain is Chaperonin GroEL 2 (542 aa).

ATP-binding positions include 30–33, Lys-51, 87–91, Gly-415, and Asp-496; these read TLGP and DGTTT.

The protein belongs to the chaperonin (HSP60) family. As to quaternary structure, forms a cylinder of 14 subunits composed of two heptameric rings stacked back-to-back. Interacts with the co-chaperonin GroES.

It localises to the cytoplasm. It carries out the reaction ATP + H2O + a folded polypeptide = ADP + phosphate + an unfolded polypeptide.. Functionally, together with its co-chaperonin GroES, plays an essential role in assisting protein folding. The GroEL-GroES system forms a nano-cage that allows encapsulation of the non-native substrate proteins and provides a physical environment optimized to promote and accelerate protein folding. The protein is Chaperonin GroEL 2 of Azorhizobium caulinodans (strain ATCC 43989 / DSM 5975 / JCM 20966 / LMG 6465 / NBRC 14845 / NCIMB 13405 / ORS 571).